Reading from the N-terminus, the 568-residue chain is Zinc finger protein 583 (568 aa).

The 72-residue stretch at 6 to 77 (LTFEDVSVNF…QKKGARDTCP (72 aa)) folds into the KRAB domain. C2H2-type zinc fingers lie at residues 211 to 233 (LKCS…QRIH), 239 to 261 (YACV…KRIH), 267 to 289 (YECK…QRVH), 295 to 317 (YQCK…QRIH), 323 to 345 (FECI…QRIH), 351 to 373 (YVCH…QRIH), 379 to 401 (YECK…QRVH), 407 to 429 (YECK…QRVH), 435 to 457 (YECA…QRSH), 463 to 485 (YICK…QRIH), 491 to 513 (YECN…QRIH), and 519 to 541 (YECK…EKVH).

This sequence belongs to the krueppel C2H2-type zinc-finger protein family.

It is found in the nucleus. In terms of biological role, may be involved in transcriptional regulation. The polypeptide is Zinc finger protein 583 (Znf583) (Mus musculus (Mouse)).